The primary structure comprises 218 residues: Thiopurine S-methyltransferase (218 aa).

S-adenosyl-L-methionine contacts are provided by tryptophan 10, leucine 45, glutamate 66, and arginine 123.

It belongs to the class I-like SAM-binding methyltransferase superfamily. TPMT family.

The protein resides in the cytoplasm. The catalysed reaction is S-adenosyl-L-methionine + a thiopurine = S-adenosyl-L-homocysteine + a thiopurine S-methylether.. The polypeptide is Thiopurine S-methyltransferase (Xanthomonas axonopodis pv. citri (strain 306)).